We begin with the raw amino-acid sequence, 237 residues long: Concanavalin-Br (237 aa).

Glutamate 8 and aspartate 10 together coordinate Mn(2+). The Ca(2+) site is built by aspartate 10, tyrosine 12, asparagine 14, and aspartate 19. A carbohydrate is bound at residue tyrosine 12. Positions 19, 24, and 34 each coordinate Mn(2+). Position 99 to 100 (99 to 100 (LY)) interacts with a carbohydrate. Aspartate 208 is a binding site for Ca(2+). Arginine 228 lines the a carbohydrate pocket.

Belongs to the leguminous lectin family. As to quaternary structure, homotetramer.

Its function is as follows. Glucose/D-mannose specific lectin. Has anti-inflammatory activity in rats. Induces histamine release in mast cells from hamster and rat. Induces lymphocyte proliferation and IFNG production. Shows toxicity against the aquatic snail B.glabrata at concentrations higher than 20 ug/ml. The sequence is that of Concanavalin-Br from Canavalia brasiliensis (Brazilian jack bean).